Reading from the N-terminus, the 62-residue chain is Fungus-induced protein 1 (62 aa).

Residues 1–22 form the signal peptide; it reads MSQNLFQILLIFAILAALQVQG.

The sequence is that of Fungus-induced protein 1 from Caenorhabditis briggsae.